Here is a 453-residue protein sequence, read N- to C-terminus: uncharacterized protein (453 aa).

Disordered regions lie at residues 183 to 210 (GNGR…RSLS) and 428 to 453 (PDSM…QYSK). Residues 198 to 207 (TKAHNYKTRR) are compositionally biased toward basic residues. Over residues 433–453 (HPPTFSKNNTSSNPKSHQYSK) the composition is skewed to polar residues.

This is an uncharacterized protein from Saccharomyces cerevisiae (strain ATCC 204508 / S288c) (Baker's yeast).